The primary structure comprises 116 residues: Nascent polypeptide-associated complex protein (116 aa).

The NAC-A/B domain maps to 6 to 70 (PKQMKDLERM…AREESKQQQK (65 aa)).

The protein belongs to the NAC-alpha family. In terms of assembly, homodimer. Interacts with the ribosome. Binds ribosomal RNA.

In terms of biological role, contacts the emerging nascent chain on the ribosome. This chain is Nascent polypeptide-associated complex protein, found in Sulfolobus acidocaldarius (strain ATCC 33909 / DSM 639 / JCM 8929 / NBRC 15157 / NCIMB 11770).